A 421-amino-acid chain; its full sequence is Nuclear envelope integral membrane protein 2 (421 aa).

An N-terminal signal peptide occupies residues 1–22; sequence MLPRLWWLVLWLQPLATLPASA. Helical transmembrane passes span 64–84, 147–167, 175–195, 206–226, 238–258, and 281–301; these read YMWS…IVYI, NIVD…FLYA, VFYY…FVLL, TFGA…CQLM, MYIL…CYSH, and LVYT…VLLF.

The protein belongs to the NEMP family. As to expression, in the ovary, highly expressed in somatic cells.

It is found in the nucleus inner membrane. This Mus musculus (Mouse) protein is Nuclear envelope integral membrane protein 2 (Nemp2).